An 843-amino-acid polypeptide reads, in one-letter code: MTQVTVKELAKVVDTPVERLLQQMREAGLPHTAAEQVVTDNEKQALLTHLKSGHKAKVEEPRKITLQRKTTSTLRVAGSKSISVEVRKKKVFVQRSPEEIEAERKREMDERRAVENAARQKAEEEAKRRAEEDARNQPAAGQPASAPAQPVAAAEPVREAPAPAAAAPAPASAAPSADARKRDEQRRPDKPRADDRNARGGDGERKNAPHRASVKEKAPAPRVAPRTTDEESDSFRRGGRGKSRLKKRNAHGFQSPTGPVIRDVAIGETITVGELSAQMSVKAAEVIKFMFKMGTPVTINQVLDQETAQLIAEELGHKVTLVSDNALEDSLAESLKFEGESFSRAPVVTVMGHVDHGKTSLLDYIRRAKVAAGEAGGITQHIGAYHVETERGMVTFLDTPGHAAFTAMRARGAKATDIVILVVAADDGVMPQTIEAVQHAVAAGVPLVVAVNKIDKPGADLDRIRSELSVHGVTSEEWGGDTPFVSVSAKMGTGVDELLEAVLLQAEVLELKATPSAPGRGVVVESRLDKGRGPVATVLVQDGTLRQGDMVLVGSNFGRIRAMLDENGKPVKEAGPSIPVEILGLDGTPDAGDEMSVLADEKKAREVALFRQGKFREVKLARAHAGKLENIFENMGQEEKKTLNIVLKSDVRGSLEALQGALGGLGNDEVQVRVVGGGVGGITESDANLALASNAVLFGFNVRADAGARKIVEQEGLDMRYYNVIYDIIEDVKKALTGMLGSDVRENILGIAEVRDVFRSPKFGAIAGCMVLEGTVYRNRPIRVLREDIVIFEGELESLRRFKDDAAEVRAGMECGIGVKSYNDVKVGDKIEVFEKVQVARSL.

Residues 94-259 (QRSPEEIEAE…AHGFQSPTGP (166 aa)) are disordered. The segment covering 96–135 (SPEEIEAERKREMDERRAVENAARQKAEEEAKRRAEEDAR) has biased composition (basic and acidic residues). A compositionally biased stretch (low complexity) spans 136–177 (NQPAAGQPASAPAQPVAAAEPVREAPAPAAAAPAPASAAPSA). Basic and acidic residues-rich tracts occupy residues 178–219 (DARK…EKAP) and 227–236 (TTDEESDSFR). Basic residues predominate over residues 237 to 250 (RGGRGKSRLKKRNA). The tr-type G domain occupies 343 to 512 (SRAPVVTVMG…LLQAEVLELK (170 aa)). Residues 352–359 (GHVDHGKT) form a G1 region. 352–359 (GHVDHGKT) contributes to the GTP binding site. The G2 stretch occupies residues 377 to 381 (GITQH). Residues 398 to 401 (DTPG) form a G3 region. GTP-binding positions include 398–402 (DTPGH) and 452–455 (NKID). The segment at 452 to 455 (NKID) is G4. Positions 488–490 (SAK) are G5.

Belongs to the TRAFAC class translation factor GTPase superfamily. Classic translation factor GTPase family. IF-2 subfamily.

It is found in the cytoplasm. One of the essential components for the initiation of protein synthesis. Protects formylmethionyl-tRNA from spontaneous hydrolysis and promotes its binding to the 30S ribosomal subunits. Also involved in the hydrolysis of GTP during the formation of the 70S ribosomal complex. The sequence is that of Translation initiation factor IF-2 from Pseudomonas savastanoi pv. phaseolicola (strain 1448A / Race 6) (Pseudomonas syringae pv. phaseolicola (strain 1448A / Race 6)).